The sequence spans 611 residues: Adenosylhomocysteinase 3 (611 aa).

Low complexity-rich tracts occupy residues 1–14 (MSVQVVSAAAAAKV), 40–57 (AMAPPAGGGDPEAPAPAA), and 68–78 (GPAAALSPAAG). Positions 1-184 (MSVQVVSAAA…KQQKNSKGNS (184 aa)) are disordered. The residue at position 2 (S2) is an N-acetylserine. The tract at residues 2-109 (SVQVVSAAAA…DGGEALVSPD (108 aa)) is LISN domain, inhibits interaction with ITPR1. A Phosphoserine modification is found at S107. Residues 135 to 144 (RPTKIGRRSL) are compositionally biased toward basic residues. Over residues 145–164 (SRSISQSSTDSYSSAASYTD) the composition is skewed to low complexity. Phosphoserine occurs at positions 149, 152, 155, and 158. The substrate site is built by T236, D310, and E335. Residue 336 to 338 (SVT) participates in NAD(+) binding. 2 residues coordinate substrate: K365 and D369. NAD(+) contacts are provided by residues N370, 401–406 (GEVGKG), E422, N457, 478–479 (MG), and N525.

It belongs to the adenosylhomocysteinase family. As to quaternary structure, homotetramer. Forms heteromultimers with AHCYL1 (via the C-terminal region). Interacts with ITPR1; with lower affinity than AHCYL1 and maybe via ITPR1. Interacts with SLC4A4. Interacts with ZCCHC4. Requires NAD(+) as cofactor. Post-translationally, phosphorylated during neuronal differentiation at the LISN domain. As to expression, expressed in parotid and acinar cells (at protein level).

It is found in the cytoplasm. The protein resides in the microsome. It catalyses the reaction S-adenosyl-L-homocysteine + H2O = L-homocysteine + adenosine. It participates in amino-acid biosynthesis; L-homocysteine biosynthesis; L-homocysteine from S-adenosyl-L-homocysteine: step 1/1. Its function is as follows. May regulate the electrogenic sodium/bicarbonate cotransporter SLC4A4 activity and Mg(2+)-sensitivity. On the contrary of its homolog AHCYL1, does not regulate ITPR1 sensitivity to inositol 1,4,5-trisphosphate. The protein is Adenosylhomocysteinase 3 of Bos taurus (Bovine).